The primary structure comprises 401 residues: Imidazolonepropionase (401 aa).

2 residues coordinate Fe(3+): His-70 and His-72. Zn(2+)-binding residues include His-70 and His-72. Residues Arg-79, Tyr-142, and His-175 each coordinate 4-imidazolone-5-propanoate. Tyr-142 contacts N-formimidoyl-L-glutamate. His-238 contacts Fe(3+). His-238 lines the Zn(2+) pocket. Gln-241 serves as a coordination point for 4-imidazolone-5-propanoate. Asp-313 lines the Fe(3+) pocket. Asp-313 lines the Zn(2+) pocket. N-formimidoyl-L-glutamate-binding residues include Asn-315 and Gly-317. Thr-318 is a binding site for 4-imidazolone-5-propanoate.

The protein belongs to the metallo-dependent hydrolases superfamily. HutI family. Zn(2+) is required as a cofactor. Fe(3+) serves as cofactor.

Its subcellular location is the cytoplasm. The enzyme catalyses 4-imidazolone-5-propanoate + H2O = N-formimidoyl-L-glutamate. It participates in amino-acid degradation; L-histidine degradation into L-glutamate; N-formimidoyl-L-glutamate from L-histidine: step 3/3. In terms of biological role, catalyzes the hydrolytic cleavage of the carbon-nitrogen bond in imidazolone-5-propanoate to yield N-formimidoyl-L-glutamate. It is the third step in the universal histidine degradation pathway. In Xanthomonas axonopodis pv. citri (strain 306), this protein is Imidazolonepropionase.